The sequence spans 389 residues: Chalcone synthase H2 (389 aa).

The active site involves Cys-164.

Belongs to the thiolase-like superfamily. Chalcone/stilbene synthases family.

It localises to the cytoplasm. It catalyses the reaction (E)-4-coumaroyl-CoA + 3 malonyl-CoA + 3 H(+) = 2',4,4',6'-tetrahydroxychalcone + 3 CO2 + 4 CoA. Its pathway is secondary metabolite biosynthesis; flavonoid biosynthesis. In terms of biological role, involved in the biosynthesis of prenylated phenolics natural products which contribute to the bitter taste of beer and display broad biological activities. Chalcone synthase that can use 4-coumaroyl-CoA to produce 4,2',4',6'-tetrahydroxychalcone (also termed naringenin-chalcone or chalcone) which can, under specific conditions, spontaneously isomerize into naringenin. The sequence is that of Chalcone synthase H2 from Humulus lupulus (European hop).